The primary structure comprises 414 residues: MLEEGEHVLVAVSGGIDSMTLLYVLRKFSPLLKIKITAAHLDHRIRESSRRDREFVERICRQWNIPVETSEVDVPSLWKDSGKTLEEIAREVRYDFLKRTAKKVGASKIALAHHKNDLLETVVHRLIRGTGPLGLACISPKREEFIRPFLVFKRSEIEEYAREKGVPYVVDETNYDVKYTRNFIRHRIVPLMKELNPTVEDAVYRLVSVTHLLRNFVERTVQDFVERNVYFYKDYAVFVEPEDLFLFLEVTRWVLKEMYGRVPEYEKLIGTLKSKRVEFWSGIFVERSFGYVAVGKTVFKKKYRVEVKGDMLEMEGFKIRVVNNRNDMKFWVRNRKEGDRIIVNGRERKLKDVFIEKKVPTFYRDRVPLLVDEEDRVLWVPGIARSDFLPEDVVVELLEYPVGYVKGGTYFEQV.

13–18 (SGGIDS) is an ATP binding site.

The protein belongs to the tRNA(Ile)-lysidine synthase family.

The protein localises to the cytoplasm. The enzyme catalyses cytidine(34) in tRNA(Ile2) + L-lysine + ATP = lysidine(34) in tRNA(Ile2) + AMP + diphosphate + H(+). Functionally, ligates lysine onto the cytidine present at position 34 of the AUA codon-specific tRNA(Ile) that contains the anticodon CAU, in an ATP-dependent manner. Cytidine is converted to lysidine, thus changing the amino acid specificity of the tRNA from methionine to isoleucine. This Thermotoga sp. (strain RQ2) protein is tRNA(Ile)-lysidine synthase.